The sequence spans 162 residues: Transcription elongation factor GreA (162 aa).

Residues 45–74 adopt a coiled-coil conformation; that stretch reads ENAEYEAAREKQAFIEGRIKELEDMTARAE.

The protein belongs to the GreA/GreB family.

Functionally, necessary for efficient RNA polymerase transcription elongation past template-encoded arresting sites. The arresting sites in DNA have the property of trapping a certain fraction of elongating RNA polymerases that pass through, resulting in locked ternary complexes. Cleavage of the nascent transcript by cleavage factors such as GreA or GreB allows the resumption of elongation from the new 3'terminus. GreA releases sequences of 2 to 3 nucleotides. This is Transcription elongation factor GreA from Rickettsia typhi (strain ATCC VR-144 / Wilmington).